Reading from the N-terminus, the 379-residue chain is Queuine tRNA-ribosyltransferase (379 aa).

The active-site Proton acceptor is Asp-94. Residues 94-98 (DSGGF), Asp-148, Gln-191, and Gly-218 each bind substrate. Residues 249-255 (GVGSPDS) form an RNA binding region. The active-site Nucleophile is Asp-268. Positions 273-277 (TRIGR) are RNA binding; important for wobble base 34 recognition. Zn(2+)-binding residues include Cys-306, Cys-308, Cys-311, and His-337.

It belongs to the queuine tRNA-ribosyltransferase family. In terms of assembly, homodimer. Within each dimer, one monomer is responsible for RNA recognition and catalysis, while the other monomer binds to the replacement base PreQ1. Zn(2+) serves as cofactor.

The enzyme catalyses 7-aminomethyl-7-carbaguanine + guanosine(34) in tRNA = 7-aminomethyl-7-carbaguanosine(34) in tRNA + guanine. Its pathway is tRNA modification; tRNA-queuosine biosynthesis. Catalyzes the base-exchange of a guanine (G) residue with the queuine precursor 7-aminomethyl-7-deazaguanine (PreQ1) at position 34 (anticodon wobble position) in tRNAs with GU(N) anticodons (tRNA-Asp, -Asn, -His and -Tyr). Catalysis occurs through a double-displacement mechanism. The nucleophile active site attacks the C1' of nucleotide 34 to detach the guanine base from the RNA, forming a covalent enzyme-RNA intermediate. The proton acceptor active site deprotonates the incoming PreQ1, allowing a nucleophilic attack on the C1' of the ribose to form the product. After dissociation, two additional enzymatic reactions on the tRNA convert PreQ1 to queuine (Q), resulting in the hypermodified nucleoside queuosine (7-(((4,5-cis-dihydroxy-2-cyclopenten-1-yl)amino)methyl)-7-deazaguanosine). The polypeptide is Queuine tRNA-ribosyltransferase (Anoxybacillus flavithermus (strain DSM 21510 / WK1)).